The primary structure comprises 20 residues: Thylakoid lumenal 22 kDa protein (20 aa).

The protein localises to the plastid. The protein resides in the chloroplast thylakoid lumen. The protein is Thylakoid lumenal 22 kDa protein of Spinacia oleracea (Spinach).